A 337-amino-acid chain; its full sequence is Anthraniloyl-CoA anthraniloyltransferase (337 aa).

Anthraniloyl-CoA is bound by residues T29 and F33. C113 (acyl-thioester intermediate) is an active-site residue. Anthraniloyl-CoA is bound by residues 154-155, 221-224, and H258; these read RN and MRGR.

It belongs to the thiolase-like superfamily. FabH family. In terms of assembly, homodimer.

Its subcellular location is the cytoplasm. It carries out the reaction anthraniloyl-CoA + malonyl-CoA + H(+) = (2-aminobenzoyl)acetyl-CoA + CO2 + CoA. Its function is as follows. Required for the biosynthesis of a number of signaling molecules, such as the quinolone signal 2-heptyl-3-hydroxy-4(1H)-quinolone (PQS), 2-heptyl-4-hydroxyquinoline (HHQ) and 2,4-dihydroxyquinoline (DHQ). These molecules are required for normal biofilm formation. Catalyzes the transfer of the anthraniloyl moiety from anthraniloyl-CoA to malonyl-CoA to form 2-aminobenzoylacetyl-CoA. The first step of the reaction is the formation of a covalent anthraniloyl-PqsD intermediate. Next, the short-lived intermediate 3-(2-aminophenyl)-3-oxopropanoyl-CoA is formed. An intramolecular rearrangement of this intermediate can give rise to 2,4-dihydroxyquinoline (DHQ). This chain is Anthraniloyl-CoA anthraniloyltransferase (pqsD), found in Pseudomonas aeruginosa (strain ATCC 15692 / DSM 22644 / CIP 104116 / JCM 14847 / LMG 12228 / 1C / PRS 101 / PAO1).